The sequence spans 229 residues: Large ribosomal subunit protein uL1 (229 aa).

Belongs to the universal ribosomal protein uL1 family. In terms of assembly, part of the 50S ribosomal subunit.

Binds directly to 23S rRNA. The L1 stalk is quite mobile in the ribosome, and is involved in E site tRNA release. In terms of biological role, protein L1 is also a translational repressor protein, it controls the translation of the L11 operon by binding to its mRNA. This chain is Large ribosomal subunit protein uL1, found in Phenylobacterium zucineum (strain HLK1).